The chain runs to 110 residues: BolA-like protein 3 (110 aa).

The protein belongs to the BolA/IbaG family. Interacts with NFU1.

Its subcellular location is the mitochondrion. Its function is as follows. Acts as a mitochondrial iron-sulfur (Fe-S) cluster assembly factor that facilitates (Fe-S) cluster insertion into a subset of mitochondrial proteins. Probably acts together with NFU1. This is BolA-like protein 3 (BOLA3) from Bos taurus (Bovine).